The primary structure comprises 326 residues: Beta-ketoacyl-[acyl-carrier-protein] synthase III (326 aa).

Catalysis depends on residues C112 and H251. Positions 252-256 are ACP-binding; that stretch reads QANSR. N281 is an active-site residue.

It belongs to the thiolase-like superfamily. FabH family. As to quaternary structure, homodimer.

The protein localises to the cytoplasm. The enzyme catalyses malonyl-[ACP] + acetyl-CoA + H(+) = 3-oxobutanoyl-[ACP] + CO2 + CoA. It functions in the pathway lipid metabolism; fatty acid biosynthesis. In terms of biological role, catalyzes the condensation reaction of fatty acid synthesis by the addition to an acyl acceptor of two carbons from malonyl-ACP. Catalyzes the first condensation reaction which initiates fatty acid synthesis and may therefore play a role in governing the total rate of fatty acid production. Possesses both acetoacetyl-ACP synthase and acetyl transacylase activities. Its substrate specificity determines the biosynthesis of branched-chain and/or straight-chain of fatty acids. In Clostridium botulinum (strain Langeland / NCTC 10281 / Type F), this protein is Beta-ketoacyl-[acyl-carrier-protein] synthase III.